The chain runs to 977 residues: Zinc finger CCCH domain-containing protein 7B (977 aa).

3 TPR repeats span residues 1-27, 36-69, and 82-115; these read MERQKRKADIEKGLQFIQSTLPLKQEE, VQNLFAEGNDLFREKDYKQALVQYMEGLNVADYA, and CKLHVNRAACYFTMGLYEKALEDSEKALGLDSES. The residue at position 217 (Ser217) is a Phosphoserine. Positions 248–256 match the LD motif; interaction with NSP3 motif; sequence STDSLDDFS. Phosphoserine occurs at positions 364 and 367. Residues 365 to 403 form a disordered region; sequence FGSTRGSLDKPDSFMEETNSQDHRPPSGAQKPAPSPEPC. 3 consecutive C3H1-type zinc fingers follow at residues 484–508, 616–638, and 754–782; these read LCKDMINKQDCKYGDNCTFAYHQEE, VCRHEVRYGCLREDSCHFAHSFI, and PQQYDLCIHAQNGRKCQYVGNCSFAHSPE. The segment at 842 to 866 adopts a C2H2-type zinc-finger fold; that stretch reads YHCWLCGKNSNSKKQWQQHIQSEKH. The C3H1-type 4 zinc finger occupies 886–914; that stretch reads MGEFRLCDRLQKGKACPDGDKCRCAHGQE.

In terms of assembly, (Microbial infection) Interacts (via LD motif) with rotavirus A NSP3 (via the coiled-coil region).

Its subcellular location is the nucleus. Functionally, may be a specific regulator of miRNA biogenesis. Binds to microRNAs MIR7-1, MIR16-2 and MIR29A hairpins recognizing the 'ATA(A/T)' motif in the apical loop. This is Zinc finger CCCH domain-containing protein 7B (ZC3H7B) from Homo sapiens (Human).